The sequence spans 478 residues: Cytochrome c-552 (478 aa).

Positions 1–26 are cleaved as a signal peptide; sequence MARTILRARRFFSLILPFFFISSVYA. His-94 contacts heme c. Residues Cys-122, Cys-125, and Lys-126 each coordinate heme. Residues Cys-160, Cys-163, His-164, Cys-209, Cys-212, and His-213 each coordinate heme c. Ca(2+) is bound by residues Glu-215, Tyr-216, Lys-261, and Gln-263. Substrate is bound at residue Tyr-216. His-264 lines the substrate pocket. Residues His-275, Cys-282, Cys-285, His-286, His-301, Cys-314, Cys-317, His-318, and His-393 each contribute to the heme c site.

Belongs to the cytochrome c-552 family. Ca(2+) is required as a cofactor. Requires heme c as cofactor.

Its subcellular location is the periplasm. The enzyme catalyses 6 Fe(III)-[cytochrome c] + NH4(+) + 2 H2O = 6 Fe(II)-[cytochrome c] + nitrite + 8 H(+). Its pathway is nitrogen metabolism; nitrate reduction (assimilation). Catalyzes the reduction of nitrite to ammonia, consuming six electrons in the process. The chain is Cytochrome c-552 from Citrobacter koseri (strain ATCC BAA-895 / CDC 4225-83 / SGSC4696).